Reading from the N-terminus, the 380-residue chain is Mitogen-activated protein kinase 3 (380 aa).

Alanine 2 carries the N-acetylalanine modification. Positions 43–331 (YTQLQYIGEG…VEEALAHPYL (289 aa)) constitute a Protein kinase domain. ATP is bound by residues 49 to 57 (IGEGAYGMV) and lysine 72. Aspartate 167 (proton acceptor) is an active-site residue. At threonine 199 the chain carries Phosphothreonine. At threonine 203 the chain carries Phosphothreonine; by MAP2K1 and MAP2K2. Positions 203-205 (TEY) match the TXY motif. Phosphotyrosine; by MAP2K1 and MAP2K2 is present on tyrosine 205. Threonine 208 carries the post-translational modification Phosphothreonine; by autocatalysis.

The protein belongs to the protein kinase superfamily. CMGC Ser/Thr protein kinase family. MAP kinase subfamily. Binds both upstream activators and downstream substrates in multimolecular complexes. Found in a complex with at least BRAF, HRAS, MAP2K1/MEK1, MAPK3 and RGS14. Interacts with TPR. Interacts with ADAM15, ARRB2, CANX, DAPK1 (via death domain), HSF4, IER3, MAP2K1/MEK1, NISCH, and SGK1. Interacts with MORG1. Interacts with PEA15. Interacts with isoform 1 of MKNK2 and this binding prevents from dephosphorylation and inactivation. Interacts with CDKN2AIP. Interacts with HSF1 (via D domain and preferentially with hyperphosphorylated form); this interaction occurs upon heat shock. Interacts with CAVIN4. Interacts with GIT1; this interaction is necessary for MAPK3 localization to focal adhesions. Interacts with ZNF263. Interacts with EBF4. It depends on Mg(2+) as a cofactor. Post-translationally, dually phosphorylated on Thr-203 and Tyr-205, which activates the enzyme. Ligand-activated ALK induces tyrosine phosphorylation. Dephosphorylated by PTPRJ at Tyr-205. Autophosphorylated on threonine and tyrosine residues in vitro. Phosphorylated upon FLT3 and KIT signaling. In terms of processing, ubiquitinated by TRIM15 via 'Lys-63'-linked ubiquitination; leading to activation. Deubiquitinated by CYLD.

It is found in the cytoplasm. The protein resides in the nucleus. It localises to the membrane. Its subcellular location is the caveola. The protein localises to the cell junction. It is found in the focal adhesion. It carries out the reaction L-seryl-[protein] + ATP = O-phospho-L-seryl-[protein] + ADP + H(+). It catalyses the reaction L-threonyl-[protein] + ATP = O-phospho-L-threonyl-[protein] + ADP + H(+). With respect to regulation, phosphorylated by MAP2K1/MEK1 and MAP2K2/MEK2 on Thr-203 and Tyr-205 in response to external stimuli like insulin or NGF. Both phosphorylations are required for activity. This phosphorylation causes dramatic conformational changes, which enable full activation and interaction of MAPK1/ERK2 with its substrates. Dephosphorylated and inactivated by DUSP3, DUSP6 and DUSP9. Its function is as follows. Serine/threonine kinase which acts as an essential component of the MAP kinase signal transduction pathway. MAPK1/ERK2 and MAPK3/ERK1 are the 2 MAPKs which play an important role in the MAPK/ERK cascade. They participate also in a signaling cascade initiated by activated KIT and KITLG/SCF. Depending on the cellular context, the MAPK/ERK cascade mediates diverse biological functions such as cell growth, adhesion, survival and differentiation through the regulation of transcription, translation, cytoskeletal rearrangements. The MAPK/ERK cascade also plays a role in initiation and regulation of meiosis, mitosis, and postmitotic functions in differentiated cells by phosphorylating a number of transcription factors. About 160 substrates have already been discovered for ERKs. Many of these substrates are localized in the nucleus, and seem to participate in the regulation of transcription upon stimulation. However, other substrates are found in the cytosol as well as in other cellular organelles, and those are responsible for processes such as translation, mitosis and apoptosis. Moreover, the MAPK/ERK cascade is also involved in the regulation of the endosomal dynamics, including lysosome processing and endosome cycling through the perinuclear recycling compartment (PNRC); as well as in the fragmentation of the Golgi apparatus during mitosis. The substrates include transcription factors (such as ATF2, BCL6, ELK1, ERF, FOS, HSF4 or SPZ1), cytoskeletal elements (such as CANX, CTTN, GJA1, MAP2, MAPT, PXN, SORBS3 or STMN1), regulators of apoptosis (such as BAD, BTG2, CASP9, DAPK1, IER3, MCL1 or PPARG), regulators of translation (such as EIF4EBP1) and a variety of other signaling-related molecules (like ARHGEF2, DEPTOR, FRS2 or GRB10). Protein kinases (such as RAF1, RPS6KA1/RSK1, RPS6KA3/RSK2, RPS6KA2/RSK3, RPS6KA6/RSK4, SYK, MKNK1/MNK1, MKNK2/MNK2, RPS6KA5/MSK1, RPS6KA4/MSK2, MAPKAPK3 or MAPKAPK5) and phosphatases (such as DUSP1, DUSP4, DUSP6 or DUSP16) are other substrates which enable the propagation the MAPK/ERK signal to additional cytosolic and nuclear targets, thereby extending the specificity of the cascade. This chain is Mitogen-activated protein kinase 3 (Mapk3), found in Mus musculus (Mouse).